The primary structure comprises 82 residues: Acyl carrier protein (82 aa).

The Carrier domain occupies 4–79 (PEMEERLRKI…DALNYLETHQ (76 aa)). Residue S39 is modified to O-(pantetheine 4'-phosphoryl)serine.

It belongs to the acyl carrier protein (ACP) family. Post-translationally, 4'-phosphopantetheine is transferred from CoA to a specific serine of apo-ACP by AcpS. This modification is essential for activity because fatty acids are bound in thioester linkage to the sulfhydryl of the prosthetic group.

Its subcellular location is the cytoplasm. Its pathway is lipid metabolism; fatty acid biosynthesis. Carrier of the growing fatty acid chain in fatty acid biosynthesis. The protein is Acyl carrier protein of Chloroflexus aurantiacus (strain ATCC 29366 / DSM 635 / J-10-fl).